The following is a 552-amino-acid chain: Hyaluronan synthase 2 (552 aa).

At 1–11 (MHCERFLCILR) the chain is on the cytoplasmic side. Residues 12–32 (IIGTTLFGVSLLLGITAAYIV) traverse the membrane as a helical segment. Over 33–45 (GYQFIQTDNYYFS) the chain is Extracellular. Residues 46-66 (FGLYGAFLASHLIIQSLFAFL) form a helical membrane-spanning segment. Over 67–374 (EHRKMKKSLE…NAMWFHKHHL (308 aa)) the chain is Cytoplasmic. Position 110 is a phosphothreonine (Thr110). Residue Lys190 forms a Glycyl lysine isopeptide (Lys-Gly) (interchain with G-Cter in ubiquitin) linkage. Ser221 carries an O-linked (GlcNAc) serine glycan. Phosphothreonine is present on Thr328. A helical transmembrane segment spans residues 375-395 (WMTYEAVITGFFPFFLIATVI). At 396 to 402 (QLFYRGK) the chain is on the extracellular side. The helical transmembrane segment at 403-423 (IWNTLLFLLTVQLVGLIKSSF) threads the bilayer. The Cytoplasmic portion of the chain corresponds to 424–429 (ASCLRG). A helical transmembrane segment spans residues 430-450 (NIVMVFMSLYSVLYMSSLLPA). The Extracellular segment spans residues 451-475 (KMFAIATINKAGWGTSGRKTIVVNF). A helical transmembrane segment spans residues 476–496 (IGLIPVSVWFTILLGGVIFTI). Residues 497–510 (YKESKKPFSESKQT) lie on the Cytoplasmic side of the membrane. A helical transmembrane segment spans residues 511–531 (VLIVGTLLYACYWVMLLTLYV). Over 532–552 (VLINKCGRRKKGQQYDMVLDV) the chain is Extracellular.

This sequence belongs to the NodC/HAS family. As to quaternary structure, homodimer; dimerization promotes enzymatic activity. Forms heterodimer with HAS3. Forms heterodimer with HAS1. Requires Mg(2+) as cofactor. Phosphorylation at Thr-328 is essential for hyaluronan synthase activity. In terms of processing, O-GlcNAcylation at Ser-221 increases the stability of HAS2 and plasma membrane localization. Post-translationally, ubiquitination at Lys-190; this ubiquitination is essential for hyaluronan synthase activity and homo- or hetero-oligomerization. Can also be poly-ubiquitinated. Deubiquitinated by USP17 and USP4. USP17 efficiently removes 'Lys-63'- and 'Lys-48'-linked polyubiquitin chains, whereas USP4 preferentially removes monoubiquitination and, partially, both 'Lys-63'- and 'Lys-48'-linked polyubiquitin chain. As to expression, expressed in corneal endothelial cells.

Its subcellular location is the cell membrane. It is found in the endoplasmic reticulum membrane. The protein resides in the vesicle. It localises to the golgi apparatus membrane. The protein localises to the lysosome. It carries out the reaction [hyaluronan](n) + UDP-N-acetyl-alpha-D-glucosamine = N-acetyl-beta-D-glucosaminyl-(1-&gt;4)-[hyaluronan](n) + UDP + H(+). The enzyme catalyses N-acetyl-beta-D-glucosaminyl-(1-&gt;4)-[hyaluronan](n) + UDP-alpha-D-glucuronate = [hyaluronan](n+1) + UDP + H(+). The protein operates within glycan biosynthesis; hyaluronan biosynthesis. Catalyzes the addition of GlcNAc or GlcUA monosaccharides to the nascent hyaluronan polymer. Therefore, it is essential to hyaluronan synthesis a major component of most extracellular matrices that has a structural role in tissues architectures and regulates cell adhesion, migration and differentiation. This is one of three isoenzymes responsible for cellular hyaluronan synthesis and it is particularly responsible for the synthesis of high molecular mass hyaluronan. This is Hyaluronan synthase 2 (HAS2) from Bos taurus (Bovine).